We begin with the raw amino-acid sequence, 347 residues long: MTQNTSLSYRDAGVDIDAGDALVERIKPLAKKTLREGVLGGIGGFGALFEVPKRYKEPVLVSGTDGVGTKLRLAFDLNRHDTVGQDLVAMSVNDILVLGAESLFFLDYFACGKLDVDTAAAVVGGIAKGCELAGCALIGGETAEMPGMYPAGEYDLAGFAVGVVEKSKAIDGKASITPGDVVLGLASSGAHSNGYSLVRKIIERSKPDMNAKFDGERTLADVVMAPTRIYVKQVLATMQKVTIKGMAHITGGGLLENVPRVLPENTVAELEKAAWPRPKLFDWMQAEGNVAENEMHRVFNCGIGLVIVVAAADADAAMAELKAQGEAVYRIGKIRARSGDEAQTLVV.

The protein belongs to the AIR synthase family.

It is found in the cytoplasm. It carries out the reaction 2-formamido-N(1)-(5-O-phospho-beta-D-ribosyl)acetamidine + ATP = 5-amino-1-(5-phospho-beta-D-ribosyl)imidazole + ADP + phosphate + H(+). It participates in purine metabolism; IMP biosynthesis via de novo pathway; 5-amino-1-(5-phospho-D-ribosyl)imidazole from N(2)-formyl-N(1)-(5-phospho-D-ribosyl)glycinamide: step 2/2. The protein is Phosphoribosylformylglycinamidine cyclo-ligase of Dechloromonas aromatica (strain RCB).